A 217-amino-acid polypeptide reads, in one-letter code: Probable ribonuclease P protein subunit 1 (217 aa).

It belongs to the eukaryotic/archaeal RNase P protein component 1 family.

The protein localises to the nucleus. It is found in the nucleolus. It carries out the reaction Endonucleolytic cleavage of RNA, removing 5'-extranucleotides from tRNA precursor.. Its function is as follows. Part of ribonuclease P, a protein complex that generates mature tRNA molecules by cleaving their 5'-ends. This chain is Probable ribonuclease P protein subunit 1, found in Schizosaccharomyces pombe (strain 972 / ATCC 24843) (Fission yeast).